The sequence spans 205 residues: Probable GTP-binding protein EngB (205 aa).

In terms of domain architecture, EngB-type G spans 27–201 (TGIEIAFAGR…AAKLDFWFSP (175 aa)). Residues 35–42 (GRSNAGKS), 62–66 (GRTQL), 80–83 (DLPG), 147–150 (TKAD), and 180–182 (FSA) each bind GTP. Residues Ser42 and Thr64 each contribute to the Mg(2+) site.

This sequence belongs to the TRAFAC class TrmE-Era-EngA-EngB-Septin-like GTPase superfamily. EngB GTPase family. It depends on Mg(2+) as a cofactor.

Its function is as follows. Necessary for normal cell division and for the maintenance of normal septation. In Haemophilus influenzae (strain 86-028NP), this protein is Probable GTP-binding protein EngB.